Here is a 134-residue protein sequence, read N- to C-terminus: MEFVMKQALGGATKDMGKMLGGDEEKDPDAAKKEEERQEALRQEEEERKAKYAKMEAEREAVRQGIRDKYGIKKKEEREAEAQAALEANSEGSLTRPKKAIPPGCGDAAEEEDESILDTVIKYLPGPLQDIFKK.

The disordered stretch occupies residues 1-112 (MEFVMKQALG…PGCGDAAEEE (112 aa)). Positions 15–81 (DMGKMLGGDE…IKKKEEREAE (67 aa)) are enriched in basic and acidic residues. Positions 29-69 (DAAKKEEERQEALRQEEEERKAKYAKMEAEREAVRQGIRDK) form a coiled coil. Residues 48-70 (RKAKYAKMEAEREAVRQGIRDKY) are interaction with the SNARE complex.

This sequence belongs to the complexin/synaphin family. As to quaternary structure, binds to the SNARE core complex containing SNAP25, VAMP2 and STX1A.

The protein resides in the cytoplasm. It is found in the cytosol. The protein localises to the perikaryon. Its subcellular location is the presynapse. In terms of biological role, positively regulates a late step in synaptic vesicle exocytosis. Organizes the SNAREs into a cross-linked zigzag topology that, when interposed between the vesicle and plasma membranes, is incompatible with fusion, thereby preventing SNAREs from releasing neurotransmitters until an action potential arrives at the synapse. Also involved in glucose-induced secretion of insulin by pancreatic beta-cells. This is Complexin-1 (CPLX1) from Bos taurus (Bovine).